A 654-amino-acid polypeptide reads, in one-letter code: Fructose-1,6-bisphosphatase class 3 (654 aa).

The segment at 288 to 307 is disordered; it reads NPAFKPKKRPDKHERLTQRE. Basic and acidic residues predominate over residues 298-307; that stretch reads DKHERLTQRE.

It belongs to the FBPase class 3 family. Requires Mn(2+) as cofactor.

It catalyses the reaction beta-D-fructose 1,6-bisphosphate + H2O = beta-D-fructose 6-phosphate + phosphate. It participates in carbohydrate biosynthesis; gluconeogenesis. The sequence is that of Fructose-1,6-bisphosphatase class 3 from Staphylococcus aureus (strain USA300).